Here is a 376-residue protein sequence, read N- to C-terminus: Succinyl-diaminopimelate desuccinylase (376 aa).

Histidine 67 provides a ligand contact to Zn(2+). Aspartate 69 is an active-site residue. Position 100 (aspartate 100) interacts with Zn(2+). The Proton acceptor role is filled by glutamate 134. The Zn(2+) site is built by glutamate 135, glutamate 163, and histidine 349.

The protein belongs to the peptidase M20A family. DapE subfamily. As to quaternary structure, homodimer. It depends on Zn(2+) as a cofactor. Requires Co(2+) as cofactor.

The enzyme catalyses N-succinyl-(2S,6S)-2,6-diaminopimelate + H2O = (2S,6S)-2,6-diaminopimelate + succinate. It participates in amino-acid biosynthesis; L-lysine biosynthesis via DAP pathway; LL-2,6-diaminopimelate from (S)-tetrahydrodipicolinate (succinylase route): step 3/3. Functionally, catalyzes the hydrolysis of N-succinyl-L,L-diaminopimelic acid (SDAP), forming succinate and LL-2,6-diaminopimelate (DAP), an intermediate involved in the bacterial biosynthesis of lysine and meso-diaminopimelic acid, an essential component of bacterial cell walls. The chain is Succinyl-diaminopimelate desuccinylase from Pseudoalteromonas atlantica (strain T6c / ATCC BAA-1087).